Consider the following 388-residue polypeptide: Na(+)/H(+) antiporter NhaA (388 aa).

Residues 1 to 11 (MKHLHRFFSSD) lie on the Cytoplasmic side of the membrane. Residues 12-31 (ASGGIILIIAAILAMMMANS) form a helical membrane-spanning segment. Topologically, residues 32–58 (GATSGWYHDFLETPVQLRVGSLEINKN) are periplasmic. The helical transmembrane segment at 59–80 (MLLWINDALMAVFFLLVGLEVK) threads the bilayer. Topologically, residues 81-96 (RELMQGSLASLRQAAF) are cytoplasmic. A helical membrane pass occupies residues 97 to 116 (PVIAAIGGMIVPALLYLAFN). Residues 117–122 (YADPIT) lie on the Periplasmic side of the membrane. Residues 123–130 (REGWAIPA) traverse the membrane as a helical segment. At 131-154 (ATDIAFALGVLALLGSRVPLALKI) the chain is on the cytoplasmic side. A helical membrane pass occupies residues 155–176 (FLMALAIIDDLGAIIIIALFYT). The Periplasmic segment spans residues 177–180 (NDLS). The chain crosses the membrane as a helical span at residues 181–200 (MASLGVAAVAIAVLAVLNLC). Residues 201–204 (GVRR) lie on the Cytoplasmic side of the membrane. A helical membrane pass occupies residues 205-222 (TGVYILVGVVLWTAVLKS). Residue Gly-223 is a topological domain, periplasmic. A helical transmembrane segment spans residues 224–236 (VHATLAGVIVGFF). The Cytoplasmic segment spans residues 237–253 (IPLKEKHGRSTAKRLEH). Residues 254-272 (VLHPWVAYLILPLFAFANA) form a helical membrane-spanning segment. Over 273–286 (GVSLQGVTLDGLTS) the chain is Periplasmic. A helical membrane pass occupies residues 287–310 (ILPLGIIAGLLIGKPLGISLFCWL). Residues 311 to 339 (ALRLKLAHLPEGTTYQQIMAVGILCGIGF) are Cytoplasmic-facing. A helical transmembrane segment spans residues 340 to 350 (TMSIFIASLAF). Residues 351–357 (GSVDPEL) lie on the Periplasmic side of the membrane. A helical transmembrane segment spans residues 358 to 380 (INWAKLGILVGSISSAVIGYSWL). Residues 381–388 (RVRLRPSV) lie on the Cytoplasmic side of the membrane.

Belongs to the NhaA Na(+)/H(+) (TC 2.A.33) antiporter family.

The protein localises to the cell inner membrane. It catalyses the reaction Na(+)(in) + 2 H(+)(out) = Na(+)(out) + 2 H(+)(in). In terms of biological role, na(+)/H(+) antiporter that extrudes sodium in exchange for external protons. In Shigella dysenteriae serotype 1 (strain Sd197), this protein is Na(+)/H(+) antiporter NhaA.